The sequence spans 161 residues: Nucleotide-binding protein Reut_A2760 (161 aa).

It belongs to the YajQ family.

In terms of biological role, nucleotide-binding protein. The sequence is that of Nucleotide-binding protein Reut_A2760 from Cupriavidus pinatubonensis (strain JMP 134 / LMG 1197) (Cupriavidus necator (strain JMP 134)).